A 445-amino-acid chain; its full sequence is Phosphoglucosamine mutase (445 aa).

The active-site Phosphoserine intermediate is the Ser-102. Positions 102, 241, 243, and 245 each coordinate Mg(2+). Ser-102 carries the phosphoserine modification.

The protein belongs to the phosphohexose mutase family. It depends on Mg(2+) as a cofactor. Activated by phosphorylation.

It catalyses the reaction alpha-D-glucosamine 1-phosphate = D-glucosamine 6-phosphate. In terms of biological role, catalyzes the conversion of glucosamine-6-phosphate to glucosamine-1-phosphate. The chain is Phosphoglucosamine mutase from Acinetobacter baumannii (strain ACICU).